We begin with the raw amino-acid sequence, 382 residues long: MPVEVKSSQSSGGDVRPGERDQALNLVLGQIERNFGKGSIMRLGDASRMRVETISTGALTLDLALGGGYPKGRVVEVYGPESSGKTTLTLHAIAEVQRRGGVAAFVDAEHALDPVYAASLGVDIENLLVSQPDTGEMALEIVDQLVRSAAVDIVVVDSVAALTPRAEIEGEMGDLAVGSQARLMSQAMRKITGNIGKSGCTVIFLNQLRLKIGVTYGNPETTTGGNALKFYASVRLDIRRIQTLKRGTEEYGIRAKVKVAKNKVAPPFRIAEFDILFGRGISTLGCLLDLAEETGVVTRKGAWYSYEGDNIGQGRDNTIGWLEQNPEAKDTIETLVRQKLTEGSEVTSNSMRPLAAAARSAATKSAAKGSEVQADVKTKGAA.

ATP is bound at residue 79 to 86; sequence GPESSGKT. Residues 362 to 382 form a disordered region; it reads ATKSAAKGSEVQADVKTKGAA.

It belongs to the RecA family.

It is found in the cytoplasm. Its function is as follows. Can catalyze the hydrolysis of ATP in the presence of single-stranded DNA, the ATP-dependent uptake of single-stranded DNA by duplex DNA, and the ATP-dependent hybridization of homologous single-stranded DNAs. It interacts with LexA causing its activation and leading to its autocatalytic cleavage. The polypeptide is Protein RecA (Synechococcus sp. (strain WH7803)).